Reading from the N-terminus, the 200-residue chain is Elongation factor Ts (200 aa).

The segment at 81 to 84 (TDFV) is involved in Mg(2+) ion dislocation from EF-Tu.

It belongs to the EF-Ts family.

The protein localises to the cytoplasm. In terms of biological role, associates with the EF-Tu.GDP complex and induces the exchange of GDP to GTP. It remains bound to the aminoacyl-tRNA.EF-Tu.GTP complex up to the GTP hydrolysis stage on the ribosome. The protein is Elongation factor Ts of Nitratidesulfovibrio vulgaris (strain DSM 19637 / Miyazaki F) (Desulfovibrio vulgaris).